Reading from the N-terminus, the 216-residue chain is Small ribosomal subunit protein uS3 (216 aa).

A KH type-2 domain is found at 20–91; it reads LKEFFEKALV…SVEIVVEKVH (72 aa).

It belongs to the universal ribosomal protein uS3 family.

The polypeptide is Small ribosomal subunit protein uS3 (RPS3) (Encephalitozoon cuniculi (strain GB-M1) (Microsporidian parasite)).